Here is a 232-residue protein sequence, read N- to C-terminus: tRNA (guanine-N(7)-)-methyltransferase (232 aa).

The S-adenosyl-L-methionine site is built by Glu63, Glu88, Asp115, and Asp137. Residue Asp137 is part of the active site. Substrate is bound by residues Lys141, Asp173, and Thr211–Glu214.

It belongs to the class I-like SAM-binding methyltransferase superfamily. TrmB family.

It carries out the reaction guanosine(46) in tRNA + S-adenosyl-L-methionine = N(7)-methylguanosine(46) in tRNA + S-adenosyl-L-homocysteine. It participates in tRNA modification; N(7)-methylguanine-tRNA biosynthesis. Functionally, catalyzes the formation of N(7)-methylguanine at position 46 (m7G46) in tRNA. The chain is tRNA (guanine-N(7)-)-methyltransferase from Rhizobium meliloti (strain 1021) (Ensifer meliloti).